A 449-amino-acid polypeptide reads, in one-letter code: Tubulin alpha-1C chain (449 aa).

Positions 1–4 (MREC) match the MREC motif motif. Gln11 lines the GTP pocket. Residue Lys40 is modified to N6-acetyllysine. Residues Glu71, Ser140, Gly144, Thr145, Thr179, Asn206, and Asn228 each coordinate GTP. Glu71 contacts Mg(2+). Glu254 is an active-site residue. 3'-nitrotyrosine is present on Tyr282. At Tyr432 the chain carries Phosphotyrosine. Ser439 is subject to Phosphoserine. The residue at position 449 (Tyr449) is a 3'-nitrotyrosine.

This sequence belongs to the tubulin family. In terms of assembly, dimer of alpha and beta chains. A typical microtubule is a hollow water-filled tube with an outer diameter of 25 nm and an inner diameter of 15 nM. Alpha-beta heterodimers associate head-to-tail to form protofilaments running lengthwise along the microtubule wall with the beta-tubulin subunit facing the microtubule plus end conferring a structural polarity. Microtubules usually have 13 protofilaments but different protofilament numbers can be found in some organisms and specialized cells. The cofactor is Mg(2+). Some glutamate residues at the C-terminus are polyglycylated, resulting in polyglycine chains on the gamma-carboxyl group. Glycylation is mainly limited to tubulin incorporated into axonemes (cilia and flagella) whereas glutamylation is prevalent in neuronal cells, centrioles, axonemes, and the mitotic spindle. Both modifications can coexist on the same protein on adjacent residues, and lowering polyglycylation levels increases polyglutamylation, and reciprocally. Cilia and flagella glycylation is required for their stability and maintenance. Flagella glycylation controls sperm motility. Post-translationally, some glutamate residues at the C-terminus are polyglutamylated, resulting in polyglutamate chains on the gamma-carboxyl group. Polyglutamylation plays a key role in microtubule severing by spastin (SPAST). SPAST preferentially recognizes and acts on microtubules decorated with short polyglutamate tails: severing activity by SPAST increases as the number of glutamates per tubulin rises from one to eight, but decreases beyond this glutamylation threshold. Glutamylation is also involved in cilia motility. In terms of processing, acetylation of alpha chains at Lys-40 is located inside the microtubule lumen. This modification has been correlated with increased microtubule stability, intracellular transport and ciliary assembly. Methylation of alpha chains at Lys-40 is found in mitotic microtubules and is required for normal mitosis and cytokinesis contributing to genomic stability. Post-translationally, nitration of Tyr-449 is irreversible and interferes with normal dynein intracellular distribution. In terms of processing, undergoes a tyrosination/detyrosination cycle, the cyclic removal and re-addition of a C-terminal tyrosine residue by the enzymes tubulin tyrosine carboxypeptidase (MATCAP1, VASH1 or VASH2) and tubulin tyrosine ligase (TTL), respectively. Tyrosination promotes microtubule interaction with CAP-Gly domain-containing proteins such as CLIP1, CLIP2 and DCTN1. Tyrosination regulates the initiation of dynein-dynactin motility via interaction with DCTN1, which brings the dynein-dynactin complex into contact with microtubules. In neurons, tyrosinated tubulins mediate the initiation of retrograde vesicle transport. Post-translationally, detyrosination is involved in metaphase plate congression by guiding chromosomes during mitosis: detyrosination promotes interaction with CENPE, promoting pole-proximal transport of chromosomes toward the equator. Detyrosination increases microtubules-dependent mechanotransduction in dystrophic cardiac and skeletal muscle. In cardiomyocytes, detyrosinated microtubules are required to resist to contractile compression during contraction: detyrosination promotes association with desmin (DES) at force-generating sarcomeres, leading to buckled microtubules and mechanical resistance to contraction.

It localises to the cytoplasm. The protein resides in the cytoskeleton. It catalyses the reaction GTP + H2O = GDP + phosphate + H(+). In terms of biological role, tubulin is the major constituent of microtubules, a cylinder consisting of laterally associated linear protofilaments composed of alpha- and beta-tubulin heterodimers. Microtubules grow by the addition of GTP-tubulin dimers to the microtubule end, where a stabilizing cap forms. Below the cap, tubulin dimers are in GDP-bound state, owing to GTPase activity of alpha-tubulin. This is Tubulin alpha-1C chain (Tuba1c) from Rattus norvegicus (Rat).